We begin with the raw amino-acid sequence, 220 residues long: 2-dehydro-3-deoxy-phosphogluconate aldolase (220 aa).

Catalysis depends on Glu-48, which acts as the Proton acceptor. Positions 52, 76, and 136 each coordinate pyruvate. Lys-136 (schiff-base intermediate with substrate) is an active-site residue.

The protein belongs to the KHG/KDPG aldolase family. Homotrimer.

It catalyses the reaction 2-dehydro-3-deoxy-6-phospho-D-gluconate = D-glyceraldehyde 3-phosphate + pyruvate. The protein operates within carbohydrate acid metabolism; 2-dehydro-3-deoxy-D-gluconate degradation; D-glyceraldehyde 3-phosphate and pyruvate from 2-dehydro-3-deoxy-D-gluconate: step 2/2. Involved in the degradation of glucose via the Entner-Doudoroff pathway. Catalyzes the reversible, stereospecific retro-aldol cleavage of 2-keto-3-deoxy-6-phosphogluconate (KDPG) to pyruvate and D-glyceraldehyde-3-phosphate. This is 2-dehydro-3-deoxy-phosphogluconate aldolase (eda) from Pseudomonas aeruginosa (strain ATCC 15692 / DSM 22644 / CIP 104116 / JCM 14847 / LMG 12228 / 1C / PRS 101 / PAO1).